Reading from the N-terminus, the 119-residue chain is Holo-[acyl-carrier-protein] synthase (119 aa).

Asp-8 and Glu-58 together coordinate Mg(2+).

The protein belongs to the P-Pant transferase superfamily. AcpS family. It depends on Mg(2+) as a cofactor.

It is found in the cytoplasm. The enzyme catalyses apo-[ACP] + CoA = holo-[ACP] + adenosine 3',5'-bisphosphate + H(+). Transfers the 4'-phosphopantetheine moiety from coenzyme A to a Ser of acyl-carrier-protein. The protein is Holo-[acyl-carrier-protein] synthase of Streptococcus suis (strain 05ZYH33).